The chain runs to 135 residues: MSFFRDLLESVVPTAYAEEPVEDVEVEQPEDAPEEEVSEETVEEEEDDDEDDDEDDEEEEETADPLDTLREECTKTAACKPFDHHFHECIERVTKEQEEPDYEHKHYKEDCIEEFFHLQHCVNDCVAPRLFNRLK.

The tract at residues M1 to R70 is disordered. Acidic residues predominate over residues E19–D64.

This sequence belongs to the UQCRH/QCR6 family. In terms of assembly, component of the ubiquinol-cytochrome c oxidoreductase (cytochrome b-c1 complex, complex III, CIII), a multisubunit enzyme composed of 10 subunits. The complex is composed of 3 respiratory subunits cytochrome b (COB), cytochrome c1 (CYT1) and Rieske protein (RIP1), 2 core protein subunits COR1 and QCR2, and 5 low-molecular weight protein subunits QCR6, QCR7, QCR8, QCR9 and QCR10. The complex exists as an obligatory dimer and forms supercomplexes (SCs) in the inner mitochondrial membrane with a monomer or a dimer of cytochrome c oxidase (complex IV, CIV), resulting in 2 different assemblies (supercomplexes III(2)IV and III(2)IV(2)).

The protein resides in the mitochondrion inner membrane. Its function is as follows. Component of the ubiquinol-cytochrome c oxidoreductase, a multisubunit transmembrane complex that is part of the mitochondrial electron transport chain which drives oxidative phosphorylation. The complex plays an important role in the uptake of multiple carbon sources present in different host niches. The polypeptide is Cytochrome b-c1 complex subunit 6, mitochondrial (Candida albicans (strain SC5314 / ATCC MYA-2876) (Yeast)).